The chain runs to 361 residues: tRNA/tmRNA (uracil-C(5))-methyltransferase (361 aa).

S-adenosyl-L-methionine-binding residues include Gln185, Tyr213, Asn218, Glu234, and Asp294. Cys319 serves as the catalytic Nucleophile. Residue Glu353 is the Proton acceptor of the active site.

It belongs to the class I-like SAM-binding methyltransferase superfamily. RNA M5U methyltransferase family. TrmA subfamily.

It carries out the reaction uridine(54) in tRNA + S-adenosyl-L-methionine = 5-methyluridine(54) in tRNA + S-adenosyl-L-homocysteine + H(+). The enzyme catalyses uridine(341) in tmRNA + S-adenosyl-L-methionine = 5-methyluridine(341) in tmRNA + S-adenosyl-L-homocysteine + H(+). Its function is as follows. Dual-specificity methyltransferase that catalyzes the formation of 5-methyluridine at position 54 (m5U54) in all tRNAs, and that of position 341 (m5U341) in tmRNA (transfer-mRNA). The polypeptide is tRNA/tmRNA (uracil-C(5))-methyltransferase (Azotobacter vinelandii (strain DJ / ATCC BAA-1303)).